The following is a 402-amino-acid chain: MYLEHLSLTDFRSYAQVDLVLSPGVTVLVGYNGIGKTNLMEAIGYLATLSSHRVSSDGPLLRFGTERALVRARLVRNGQTTVLELEINAGRANRGRINRSNPVRARDLLGICQTVLFAPEDLALVKGDPSNRRRFLDELLASLVPHHAATRSDYDRVLKQRNALLKSARAGRVTAAHEATLDVWDQHMAKAGAELLHARLELVELLRPHLARAYAELTDASKPADAIYRSTLQNQMDDDGASLGATGRPGPGDAAAAEDLRGLSIEELTQRYVRAFGESRKKELERGISLVGPHRDDLELVLGQAPAKGYASHGETWSMCLSLRLASYYVMLDDARTGGSAPILILDDVFAELDVQRRRKLAAIVSGAEQVLVTAAVDADIPEELSGRRVKVVPGGIDEQGE.

An ATP-binding site is contributed by 30-37; it reads GYNGIGKT.

The protein belongs to the RecF family.

It is found in the cytoplasm. The RecF protein is involved in DNA metabolism; it is required for DNA replication and normal SOS inducibility. RecF binds preferentially to single-stranded, linear DNA. It also seems to bind ATP. The protein is DNA replication and repair protein RecF of Pseudarthrobacter chlorophenolicus (strain ATCC 700700 / DSM 12829 / CIP 107037 / JCM 12360 / KCTC 9906 / NCIMB 13794 / A6) (Arthrobacter chlorophenolicus).